We begin with the raw amino-acid sequence, 200 residues long: MVNYPHKLKAKSSINRPVPGIVNFANRGMSFEKMINESNSYYLSRGLAVIHKKPTPIQIVKVDYPHRSRAKIVEAYFRQASTTDYSGVYKGHYIDFEAKETRQKKSMPMKNFHSHQIEHMEAVLEQKGICFVLLHFSSLRETYLLPASYLIEFYKIDKGGKSMPLTYIQEHGYPIEMQQLPSIPYLEIIEQKLLGGIINE.

Mg(2+)-binding residues include threonine 82, aspartate 84, glutamate 97, and glutamine 116.

This sequence belongs to the RecU family. Requires Mg(2+) as cofactor.

It localises to the cytoplasm. The enzyme catalyses Endonucleolytic cleavage at a junction such as a reciprocal single-stranded crossover between two homologous DNA duplexes (Holliday junction).. In terms of biological role, endonuclease that resolves Holliday junction intermediates in genetic recombination. Cleaves mobile four-strand junctions by introducing symmetrical nicks in paired strands. Promotes annealing of linear ssDNA with homologous dsDNA. Required for DNA repair, homologous recombination and chromosome segregation. The sequence is that of Holliday junction resolvase RecU from Streptococcus sanguinis (strain SK36).